The chain runs to 126 residues: Acyl carrier protein 2, mitochondrial (126 aa).

Residues 1-36 (MAARGAMLRYLRVNVNPTIQNPRECVLPFSILLRRF) constitute a mitochondrion transit peptide. The 76-residue stretch at 48-123 (SEVTDRVLSV…LAVDFIASHP (76 aa)) folds into the Carrier domain. S83 bears the O-(pantetheine 4'-phosphoryl)serine mark.

It belongs to the acyl carrier protein (ACP) family. In terms of assembly, complex I is composed of at least 49 different subunits. In terms of processing, 4'-phosphopantetheine is transferred from CoA to a specific serine of the apo-ACP-like protein.

It is found in the mitochondrion. The protein operates within lipid metabolism; fatty acid biosynthesis. Functionally, carrier of the growing fatty acid chain in fatty acid biosynthesis. May be involved in the synthesis of short and medium chain fatty acids. Accessory and non-catalytic subunit of the mitochondrial membrane respiratory chain NADH dehydrogenase (Complex I), which functions in the transfer of electrons from NADH to the respiratory chain. The chain is Acyl carrier protein 2, mitochondrial (MTACP2) from Arabidopsis thaliana (Mouse-ear cress).